The following is a 427-amino-acid chain: Glutamyl-tRNA reductase (427 aa).

Residues threonine 48–arginine 51, serine 99, glutamate 104–glutamine 106, and glutamine 110 each bind substrate. Cysteine 49 functions as the Nucleophile in the catalytic mechanism. An NADP(+)-binding site is contributed by glycine 179–glycine 184.

Belongs to the glutamyl-tRNA reductase family. In terms of assembly, homodimer.

It catalyses the reaction (S)-4-amino-5-oxopentanoate + tRNA(Glu) + NADP(+) = L-glutamyl-tRNA(Glu) + NADPH + H(+). The protein operates within porphyrin-containing compound metabolism; protoporphyrin-IX biosynthesis; 5-aminolevulinate from L-glutamyl-tRNA(Glu): step 1/2. Functionally, catalyzes the NADPH-dependent reduction of glutamyl-tRNA(Glu) to glutamate 1-semialdehyde (GSA). This Methanocella arvoryzae (strain DSM 22066 / NBRC 105507 / MRE50) protein is Glutamyl-tRNA reductase.